We begin with the raw amino-acid sequence, 2191 residues long: FRAS1-related extracellular matrix protein 1 (2191 aa).

The signal sequence occupies residues 1 to 29 (MHSPGCTGPKAQWFLLLQLLLLHLDRVSA). The short motif at 205–207 (RGD) is the Cell attachment site element. CSPG repeat units lie at residues 300–394 (VPRA…MELE), 419–506 (APRV…FRIF), and 527–621 (PPFL…FVLW). An N-linked (GlcNAc...) asparagine glycan is attached at N341. N-linked (GlcNAc...) asparagine glycans are attached at residues N566 and N628. 3 CSPG repeats span residues 648 to 779 (KEAP…VSVS), 801 to 892 (QVPE…LEVT), and 912 to 1007 (EPPI…LVVS). A glycan (N-linked (GlcNAc...) asparagine) is linked at N1039. CSPG repeat units follow at residues 1049–1151 (PPSI…VYAT), 1172–1273 (EAPD…IQLS), 1294–1391 (TPTL…FYLW), 1412–1504 (GDIV…FTIS), 1525–1614 (LPVL…FLAT), and 1650–1742 (HLHS…FQAM). The N-linked (GlcNAc...) asparagine glycan is linked to N1180. An N-linked (GlcNAc...) asparagine glycan is attached at N1584. The Calx-beta domain occupies 1749–1848 (ATPQSLDLRW…DDEVFEVILN (100 aa)). A disordered region spans residues 1874–1921 (HPSNSFNQSKHSTWGKGPWHPLPSGSSSLTTSGSPLLERPPPSFTSGD). Over residues 1875 to 1885 (PSNSFNQSKHS) the composition is skewed to polar residues. The segment covering 1895 to 1910 (LPSGSSSLTTSGSPLL) has biased composition (low complexity). One can recognise a C-type lectin domain in the interval 2072–2186 (HSGYCHILVT…CSKGKAHNFV (115 aa)). An intrachain disulfide couples C2163 to C2177.

It belongs to the FRAS1 family. In terms of assembly, interacts with FREM2. In terms of tissue distribution, expressed in epidermis and hair follicles. Expressed in many developing epidermal appendages, including the whisker and sensory vibrissae, cranial and trunk hair follicles, meibomian glands, teeth, footpads, eyelash primordia and invaginating mammary glands. Limb expression localizes to sheets of dermal cells on the apical and basal surfaces of the digits but, unlike FRAS1, is excluded from the apical ectodermal ridge. Usually expressed at higher level in dermal cells underlying the differentiating epithelial components, especially underlying the epidermis of the head, limbs, and eyelids. Expression in the eyelid dermis is apparent as early as 13 dpc. Postnatal expression in the skin is limited to the dermal papillae. In the kidney, it is expressed from 12.5 dpc in the mesenchyme surrounding the branching ureteric tree, with a strong expression in the more proximal regions of these tubules rather than at the proliferating and branching ends of the ureteric buds. In hair follicle, it is selectively expressed in the vibrissal hair primordia during development. Preferentially expressed in the whisker pad epithelia of 12.5 dpc embryos, in both the epithelial and mesenchymal cells of developing hair follicles. In the early stages of hair follicle development (i.e. stages 0-1), it is expressed in both hair placodes and dermal condensations. In stage 2, it is detected in dermal condensations and adjacent epithelia, but not in the upper region of the hair follicles. Expressed at the tip of developing hair follicles in the later stages (i.e. stages 3-5).

It is found in the secreted. The protein localises to the extracellular space. Its subcellular location is the extracellular matrix. The protein resides in the basement membrane. Its function is as follows. Extracellular matrix protein that plays a role in epidermal differentiation and is required for epidermal adhesion during embryonic development. The chain is FRAS1-related extracellular matrix protein 1 (Frem1) from Mus musculus (Mouse).